A 208-amino-acid polypeptide reads, in one-letter code: Large ribosomal subunit protein uL4 (208 aa).

The interval 51-79 (AKERAEVSFSTKKLKKQKGTGGARAGSRK) is disordered.

This sequence belongs to the universal ribosomal protein uL4 family. In terms of assembly, part of the 50S ribosomal subunit.

Its function is as follows. One of the primary rRNA binding proteins, this protein initially binds near the 5'-end of the 23S rRNA. It is important during the early stages of 50S assembly. It makes multiple contacts with different domains of the 23S rRNA in the assembled 50S subunit and ribosome. Functionally, forms part of the polypeptide exit tunnel. This Cytophaga hutchinsonii (strain ATCC 33406 / DSM 1761 / CIP 103989 / NBRC 15051 / NCIMB 9469 / D465) protein is Large ribosomal subunit protein uL4.